Here is a 125-residue protein sequence, read N- to C-terminus: Mite group 2 allergen Gly d 2.02 (125 aa).

The protein belongs to the NPC2 family.

It is found in the secreted. The polypeptide is Mite group 2 allergen Gly d 2.02 (Glycyphagus domesticus (House itch mite)).